The primary structure comprises 748 residues: Catalase-peroxidase (748 aa).

The tryptophyl-tyrosyl-methioninium (Trp-Tyr) (with M-264) cross-link spans W92–Y238. Residue H93 is the Proton acceptor of the active site. A cross-link (tryptophyl-tyrosyl-methioninium (Tyr-Met) (with W-92)) is located at residues Y238–M264. H279 serves as a coordination point for heme b.

It belongs to the peroxidase family. Peroxidase/catalase subfamily. In terms of assembly, homodimer or homotetramer. It depends on heme b as a cofactor. Formation of the three residue Trp-Tyr-Met cross-link is important for the catalase, but not the peroxidase activity of the enzyme.

It catalyses the reaction H2O2 + AH2 = A + 2 H2O. It carries out the reaction 2 H2O2 = O2 + 2 H2O. Bifunctional enzyme with both catalase and broad-spectrum peroxidase activity. This is Catalase-peroxidase from Xanthomonas axonopodis pv. citri (strain 306).